Reading from the N-terminus, the 70-residue chain is Small ribosomal subunit protein bS21 (70 aa).

This sequence belongs to the bacterial ribosomal protein bS21 family.

The sequence is that of Small ribosomal subunit protein bS21 from Sulfurovum sp. (strain NBC37-1).